The following is a 954-amino-acid chain: Glycine dehydrogenase (decarboxylating) (954 aa).

Lys700 carries the N6-(pyridoxal phosphate)lysine modification.

The protein belongs to the GcvP family. In terms of assembly, the glycine cleavage system is composed of four proteins: P, T, L and H. Pyridoxal 5'-phosphate serves as cofactor.

The catalysed reaction is N(6)-[(R)-lipoyl]-L-lysyl-[glycine-cleavage complex H protein] + glycine + H(+) = N(6)-[(R)-S(8)-aminomethyldihydrolipoyl]-L-lysyl-[glycine-cleavage complex H protein] + CO2. In terms of biological role, the glycine cleavage system catalyzes the degradation of glycine. The P protein binds the alpha-amino group of glycine through its pyridoxal phosphate cofactor; CO(2) is released and the remaining methylamine moiety is then transferred to the lipoamide cofactor of the H protein. The protein is Glycine dehydrogenase (decarboxylating) of Dinoroseobacter shibae (strain DSM 16493 / NCIMB 14021 / DFL 12).